We begin with the raw amino-acid sequence, 772 residues long: Protocadherin beta-6 (772 aa).

The first 28 residues, 1 to 28, serve as a signal peptide directing secretion; sequence METTLAKTPEKRQVVFLAILLLLWEAGS. 5 consecutive Cadherin domains span residues 31–133, 134–242, 243–346, 347–450, and 451–560; these read IRYS…SPEF, PDTE…APEF, VQSL…APKL, TISS…APAF, and TQTS…APFI. At 31–690 the chain is on the extracellular side; sequence IRYSIPEETE…QDEDMLTLYL (660 aa). Cys-96 and Cys-102 are joined by a disulfide. N-linked (GlcNAc...) asparagine glycosylation occurs at Asn-169. A glycan (O-linked (Man) serine) is linked at Ser-223. Residue Thr-225 is glycosylated (O-linked (Man) threonine). N-linked (GlcNAc...) asparagine glycosylation is present at Asn-417. Asn-566 is a glycosylation site (N-linked (GlcNAc...) asparagine). The region spanning 575–675 is the Cadherin 6 domain; it reads LPRAAEPGYL…SQPYLPLPEV (101 aa). Residues 691–711 form a helical membrane-spanning segment; the sequence is VIALASVSSLFLLSVLLFVGV. Over 712–772 the chain is Cytoplasmic; that stretch reads RLCRRVREAS…DFKFLNHYSQ (61 aa).

As to quaternary structure, forms homodimers in trans (molecules expressed by two different cells). Forms promiscuous heterodimers in cis (at the plasma membrane of the same cell) with other protocadherins.

It is found in the cell membrane. Calcium-dependent cell-adhesion protein involved in cells self-recognition and non-self discrimination. Thereby, it is involved in the establishment and maintenance of specific neuronal connections in the brain. In Mus musculus (Mouse), this protein is Protocadherin beta-6.